The primary structure comprises 37 residues: Large ribosomal subunit protein bL36c (37 aa).

It belongs to the bacterial ribosomal protein bL36 family.

It localises to the plastid. The sequence is that of Large ribosomal subunit protein bL36c from Cuscuta gronovii (Common dodder).